Here is a 618-residue protein sequence, read N- to C-terminus: Ubiquitin carboxyl-terminal hydrolase 2 (618 aa).

The interval 1–213 (MSQLSSTLKR…RSEYLTDYLE (213 aa)) is necessary for interaction with MDM4. Disordered regions lie at residues 54–112 (VSPT…GGSG) and 246–274 (RYTL…MNSK). The segment covering 90-100 (KRSESQTRGNE) has biased composition (basic and acidic residues). The span at 255–274 (GQASGPSRSTSPGRDTMNSK) shows a compositional bias: polar residues. The USP domain occupies 280-612 (AGLRNLGNTC…DAYLLFYELA (333 aa)). Cys289 functions as the Nucleophile in the catalytic mechanism. The necessary for interaction with MDM4 stretch occupies residues 416–516 (YLEREDSRIG…FPKILVLHLK (101 aa)). Zn(2+) contacts are provided by Cys438, Cys441, Cys489, and Cys492. His570 functions as the Proton acceptor in the catalytic mechanism.

It belongs to the peptidase C19 family. USP2 subfamily. In terms of assembly, homooligomer. Found in trimeric complex with MDM2 and MDM4 and USP2. Interacts with CCND1; the interaction is direct and promotes its stabilization by antagonizing ubiquitin-dependent degradation. Interacts (via N-terminus and C-terminus) with MDM2. Interacts with MDM4. Interacts with PER1. Interacts with KCNQ1; counteracts the NEDD4L-specific down-regulation of I(Ks) and restores plasma membrane localization of KCNQ1. Isoform 4: Interacts with NHERF4 and CLTC. In terms of tissue distribution, expressed in mesangial cells of the kidney. Isoform 1 and isoform 2 are expressed in elongated spermatids; the shorter form appearing earlier than the longer form (at protein level). Isoform 1 and isoform 2 are expressed in early round spermatids of the testis. Isoform 1 is expressed in muscle and heart. Isoform 2 is expressed in muscle, lung, heart, brain, liver and ovary. During muscle differentiation, isoform 1 expression increases before the onset of membrane fusion and decreases as the myogenic processes proceeded; un counterpart, isoform 2 expression remains low until the burst of membrane fusion but increases thereafter.

The protein localises to the cytoplasm. The protein resides in the perinuclear region. It localises to the nucleus. Its subcellular location is the membrane. It catalyses the reaction Thiol-dependent hydrolysis of ester, thioester, amide, peptide and isopeptide bonds formed by the C-terminal Gly of ubiquitin (a 76-residue protein attached to proteins as an intracellular targeting signal).. With respect to regulation, cleavage is inhibited by ubiquitin in a dosage-dependent manner. Cleavage is blocked by ubiquitin aldehyde. Hydrolase that deubiquitinates polyubiquitinated target proteins such as MDM2, MDM4 and CCND1. Isoform 1 and isoform 2 possess both ubiquitin-specific peptidase and isopeptidase activities. Deubiquitinates MDM2 without reversing MDM2-mediated p53/TP53 ubiquitination and thus indirectly promotes p53/TP53 degradation and limits p53 activity. Has no deubiquitinase activity against p53/TP53. Prevents MDM2-mediated degradation of MDM4. Plays a role in the G1/S cell-cycle progression in normal and cancer cells. Regulates the circadian clock by modulating its intrinsic circadian rhythm and its capacity to respond to external cues. Associates with clock proteins and deubiquitinates core clock component PER1 but does not affect its overall stability. Regulates the nucleocytoplasmic shuttling and nuclear retention of PER1 and its repressive role on the clock transcription factors CLOCK and BMAL1. Plays a role in the regulation of myogenic differentiation of embryonic muscle cells. In terms of biological role, circadian clock output effector that regulates Ca(2+) absorption in the small intestine. Probably functions by regulating protein levels of the membrane scaffold protein NHERF4 in a rhythmic manner, and is therefore likely to control Ca(2+) membrane permeability mediated by the Ca(2+) channel TRPV6 in the intestine. The sequence is that of Ubiquitin carboxyl-terminal hydrolase 2 (Usp2) from Rattus norvegicus (Rat).